A 144-amino-acid polypeptide reads, in one-letter code: D-aminoacyl-tRNA deacylase (144 aa).

The Gly-cisPro motif, important for rejection of L-amino acids motif lies at Gly-136–Pro-137.

The protein belongs to the DTD family. Homodimer.

It is found in the cytoplasm. It catalyses the reaction glycyl-tRNA(Ala) + H2O = tRNA(Ala) + glycine + H(+). The enzyme catalyses a D-aminoacyl-tRNA + H2O = a tRNA + a D-alpha-amino acid + H(+). Functionally, an aminoacyl-tRNA editing enzyme that deacylates mischarged D-aminoacyl-tRNAs. Also deacylates mischarged glycyl-tRNA(Ala), protecting cells against glycine mischarging by AlaRS. Acts via tRNA-based rather than protein-based catalysis; rejects L-amino acids rather than detecting D-amino acids in the active site. By recycling D-aminoacyl-tRNA to D-amino acids and free tRNA molecules, this enzyme counteracts the toxicity associated with the formation of D-aminoacyl-tRNA entities in vivo and helps enforce protein L-homochirality. The polypeptide is D-aminoacyl-tRNA deacylase (Mannheimia succiniciproducens (strain KCTC 0769BP / MBEL55E)).